A 927-amino-acid chain; its full sequence is Nuclear factor of activated T-cells, cytoplasmic 2 (927 aa).

Residues 1-29 form a disordered region; the sequence is MDVPEPQPDPDGGDGPGHEPGGSPQDELD. Phosphoserine occurs at positions 23, 53, 54, 56, 99, 107, and 110. The segment at 111–116 is calcineurin-binding; it reads PRIEIT. The tract at residues 119-201 is transactivation domain A (TAD-A); that stretch reads HELMQAGGAL…CVSPNNAGPD (83 aa). S136, S150, S170, S173, S174, S176, S177, S179, and S182 each carry phosphoserine. The required for cytoplasmic retention of the phosphorylated form stretch occupies residues 163–177; the sequence is YREPLCLSPASSGSS. 2 tandem repeats follow at residues 186–202 and 215–231. The 3 X approximate SP repeats stretch occupies residues 186–292; it reads SPYTSPCVSP…PHVALQDDSI (107 aa). Disordered stretches follow at residues 203-299 and 322-341; these read LCPQ…YPPT and SKIW…PSKA. A phosphoserine mark is found at S215, S219, S223, S238, and S245. A compositionally biased stretch (polar residues) spans 216-226; it reads PRTSPIMSPRT. The Nuclear localization signal motif lies at 253–255; that stretch reads KRR. S257, S270, S276, S278, S282, S328, and S365 each carry phosphoserine. Positions 267 to 277 are enriched in low complexity; the sequence is PAASPQRSRSP. The stretch at 274–290 is one 3; approximate repeat; it reads SRSPSPQPSPHVALQDD. The region spanning 394 to 576 is the RHD domain; sequence ASLPPLEWPL…NPIECSQRSA (183 aa). Residues 423 to 430 mediate DNA binding; it reads RAHYETEG. 3 positions are modified to phosphoserine: S757, S759, and S761. 2 disordered regions span residues 790–812 and 841–903; these read AGSQ…QQAS and FGPS…QNLD. Positions 798–812 are enriched in polar residues; it reads GSTLPHTSSASQQAS. The residue at position 860 (S860) is a Phosphoserine.

As to quaternary structure, member of the multicomponent NFATC transcription complex that consists of at least two components, a pre-existing cytoplasmic component NFATC2 and an inducible nuclear component NFATC1. Other members such as NFATC4, NFATC3 or members of the activating protein-1 family, MAF, GATA4 and Cbp/p300 can also bind the complex. The phosphorylated form specifically interacts with XPO1; which mediates nuclear export. NFATC proteins bind to DNA as monomers. Interacts with NFATC2IP. Interacts with FOXP3. Interacts with TBX21 ('Thr-302' phosphorylated form). Interacts with KAT2A. Interacts with HOMER2 and HOMER3; this interaction competes with calcineurin/PPP3CA-binding and hence prevents NFATC2 dephosphorylation and activation. Interacts with protein phosphatase PPP3CA/calcineurin A. Interacts with AKAP5 (via leucine zipper domain); this is required for NFATC2/NFAT1 recruitment to CRAC channels. Post-translationally, in resting cells, phosphorylated by NFATC-kinase on at least 18 sites in the 99-365 region. Upon cell stimulation, all these sites except Ser-245 are dephosphorylated by calcineurin. Dephosphorylation induces a conformational change that simultaneously exposes an NLS and masks an NES, which results in nuclear localization. Simultaneously, one site among Ser-53; Ser-54 and Ser-56 is phosphorylated; which is required for full transcriptional activity. In terms of processing, ubiquitinated in endothelial cells by RNF213 downstream of the non-canonical Wnt signaling pathway, leading to its degradation by the proteasome. In terms of tissue distribution, expressed in spleen, heart, testis, brain, placenta, muscle and pancreas. Expressed in the thymus. Expressed in the lung. Expressed in cartilage.

Its subcellular location is the cytoplasm. It is found in the nucleus. Functionally, plays a role in the inducible expression of cytokine genes in T cells, especially in the induction of the IL-2, IL-3, IL-4, TNF-alpha or GM-CSF. Promotes invasive migration through the activation of GPC6 expression and WNT5A signaling pathway. Is involved in the negative regulation of chondrogenesis. Recruited by AKAP5 to ORAI1 pore-forming subunit of CRAC channels in Ca(2+) signaling microdomains where store-operated Ca(2+) influx is coupled to calmodulin and calcineurin signaling and activation of NFAT-dependent transcriptional responses. This is Nuclear factor of activated T-cells, cytoplasmic 2 (Nfatc2) from Mus musculus (Mouse).